Consider the following 187-residue polypeptide: Large ribosomal subunit protein uL5 (187 aa).

It belongs to the universal ribosomal protein uL5 family. Part of the 50S ribosomal subunit; part of the 5S rRNA/L5/L18/L25 subcomplex. Contacts the 5S rRNA and the P site tRNA. Forms a bridge to the 30S subunit in the 70S ribosome.

Its function is as follows. This is one of the proteins that bind and probably mediate the attachment of the 5S RNA into the large ribosomal subunit, where it forms part of the central protuberance. In the 70S ribosome it contacts protein S13 of the 30S subunit (bridge B1b), connecting the 2 subunits; this bridge is implicated in subunit movement. Contacts the P site tRNA; the 5S rRNA and some of its associated proteins might help stabilize positioning of ribosome-bound tRNAs. This is Large ribosomal subunit protein uL5 from Mycobacterium bovis (strain ATCC BAA-935 / AF2122/97).